Reading from the N-terminus, the 339-residue chain is Dihydroorotate dehydrogenase (quinone) (339 aa).

FMN contacts are provided by residues 61-65 (AGLDK) and Thr-85. Lys-65 is a substrate binding site. Residue 110–114 (NRMGF) coordinates substrate. Residues Asn-138 and Asn-171 each coordinate FMN. A substrate-binding site is contributed by Asn-171. Residue Ser-174 is the Nucleophile of the active site. Asn-176 contributes to the substrate binding site. FMN is bound by residues Lys-216 and Thr-244. Substrate is bound at residue 245–246 (NT). FMN contacts are provided by residues Gly-267, Gly-296, and 317–318 (YS).

Belongs to the dihydroorotate dehydrogenase family. Type 2 subfamily. In terms of assembly, monomer. Requires FMN as cofactor.

The protein resides in the cell membrane. The catalysed reaction is (S)-dihydroorotate + a quinone = orotate + a quinol. It participates in pyrimidine metabolism; UMP biosynthesis via de novo pathway; orotate from (S)-dihydroorotate (quinone route): step 1/1. Its function is as follows. Catalyzes the conversion of dihydroorotate to orotate with quinone as electron acceptor. The chain is Dihydroorotate dehydrogenase (quinone) from Teredinibacter turnerae (strain ATCC 39867 / T7901).